Here is a 377-residue protein sequence, read N- to C-terminus: UPF0754 membrane protein LMHCC_0318 (377 aa).

2 helical membrane passes run 1–21 (MSVL…GAMT) and 357–377 (YLGG…AMWI).

It belongs to the UPF0754 family.

It is found in the cell membrane. The chain is UPF0754 membrane protein LMHCC_0318 from Listeria monocytogenes serotype 4a (strain HCC23).